Reading from the N-terminus, the 305-residue chain is Ribosomal protein L11 methyltransferase (305 aa).

S-adenosyl-L-methionine-binding residues include threonine 155, glycine 176, aspartate 198, and asparagine 241.

Belongs to the methyltransferase superfamily. PrmA family.

The protein resides in the cytoplasm. It carries out the reaction L-lysyl-[protein] + 3 S-adenosyl-L-methionine = N(6),N(6),N(6)-trimethyl-L-lysyl-[protein] + 3 S-adenosyl-L-homocysteine + 3 H(+). Functionally, methylates ribosomal protein L11. This Carboxydothermus hydrogenoformans (strain ATCC BAA-161 / DSM 6008 / Z-2901) protein is Ribosomal protein L11 methyltransferase.